A 747-amino-acid chain; its full sequence is Tripartite terminase subunit 3 (747 aa).

Residues 194-198 carry the Nuclear localization signal motif; it reads KRAKV. The Walker A motif motif lies at 267–274; the sequence is VPRRHGKT. Positions 361–366 match the Walker B motif motif; it reads LLFVDE. Glutamate 366 (for ATPase activity) is an active-site residue. Catalysis depends on for nuclease activity residues aspartate 521, glutamate 593, and aspartate 722.

It belongs to the herpesviridae TRM3 protein family. As to quaternary structure, interacts with the terminase subunits TRM1 and TRM2. Interacts with portal protein.

It localises to the host nucleus. Functionally, component of the molecular motor that translocates viral genomic DNA in empty capsid during DNA packaging. Forms a tripartite terminase complex together with TRM1 and TRM2 in the host cytoplasm. Once the complex reaches the host nucleus, it interacts with the capsid portal vertex. This portal forms a ring in which genomic DNA is translocated into the capsid. TRM3 carries an RNase H-like nuclease activity that plays an important role for the cleavage of concatemeric viral DNA into unit length genomes. The protein is Tripartite terminase subunit 3 of Homo sapiens (Human).